Reading from the N-terminus, the 105-residue chain is Large ribosomal subunit protein bL21 (105 aa).

The protein belongs to the bacterial ribosomal protein bL21 family. Part of the 50S ribosomal subunit. Contacts protein L20.

In terms of biological role, this protein binds to 23S rRNA in the presence of protein L20. This is Large ribosomal subunit protein bL21 from Desulfatibacillum aliphaticivorans.